We begin with the raw amino-acid sequence, 361 residues long: S-adenosylmethionine:tRNA ribosyltransferase-isomerase (361 aa).

It belongs to the QueA family. Monomer.

Its subcellular location is the cytoplasm. It carries out the reaction 7-aminomethyl-7-carbaguanosine(34) in tRNA + S-adenosyl-L-methionine = epoxyqueuosine(34) in tRNA + adenine + L-methionine + 2 H(+). Its pathway is tRNA modification; tRNA-queuosine biosynthesis. Transfers and isomerizes the ribose moiety from AdoMet to the 7-aminomethyl group of 7-deazaguanine (preQ1-tRNA) to give epoxyqueuosine (oQ-tRNA). The chain is S-adenosylmethionine:tRNA ribosyltransferase-isomerase from Actinobacillus pleuropneumoniae serotype 5b (strain L20).